Here is a 153-residue protein sequence, read N- to C-terminus: ORM1-like protein 1 (153 aa).

Residues 1–26 are Cytoplasmic-facing; it reads MNVGVAHSEVNPNTRVMNSRGMWLTY. 2 helical membrane passes run 27–46 and 47–64; these read ALGV…FSVP and VAWT…YVFL. Residues 65–100 are Cytoplasmic-facing; it reads HAVKGTPFETPDQGKARLLTHWEQLDYGVQFTSSRK. Residues 101 to 121 traverse the membrane as a helical segment; it reads FFTISPIILYFLASFYTKYDP. At 122–123 the chain is on the extracellular side; sequence TH. Residues 124 to 140 form a helical membrane-spanning segment; that stretch reads FILNTASLLSVLIPKMP. The Cytoplasmic segment spans residues 141 to 153; that stretch reads QLHGVRIFGINKY.

The protein belongs to the ORM family. As to quaternary structure, ceramide-sensitive subunit of the serine palmitoyltransferase (SPT) complex, which is also composed of SPTLC1, SPTLC2/3 and SPTSSA/B. Widely expressed. Expressed in adult and fetal heart, brain, lung, liver, skeletal muscle and kidney. Expressed in adult pancreas and placenta and in fetal spleen abd thymus. Expressed at intermediate level in pancreas, placenta and brain but low in skeletal muscle and lung.

The protein resides in the endoplasmic reticulum membrane. Its function is as follows. Plays an essential role in the homeostatic regulation of sphingolipid de novo biosynthesis by modulating the activity of the serine palmitoyltransferase (SPT) in response to ceramide levels. When complexed to SPT, the binding of ceramides to its N-terminus stabilizes a conformation that block SPT substrate entry, hence preventing SPT catalytic activity. Through this mechanism, maintains ceramide levels at sufficient concentrations for the production of complex sphingolipids, but which prevents the accumulation of ceramides to levels that trigger apoptosis. In Homo sapiens (Human), this protein is ORM1-like protein 1 (ORMDL1).